The chain runs to 193 residues: MELNVFAGQEKSELSMIEVARAILEERGRDNEMYFNDLVNEIQNYLEKSNSEIRAALPTFYSDLNVDGSFIPLGENKWGLRSWYAIDEIDEEVITLEEDDEDAPKRKKKRVNAFMDGDDDAIDYGHDDPEDEDNYPGSVSSEYDDENPDDEKDEVESYDSEINEIIPDDELDEEDVDLGEDDDEYSDEEVVDE.

In terms of domain architecture, HTH HARE-type spans 14-83 (LSMIEVARAI…GENKWGLRSW (70 aa)). 2 stretches are compositionally biased toward acidic residues: residues 117 to 134 (GDDDAIDYGHDDPEDEDN) and 142 to 193 (EYDD…VVDE). The disordered stretch occupies residues 117 to 193 (GDDDAIDYGH…EYSDEEVVDE (77 aa)).

It belongs to the RpoE family. In terms of assembly, RNAP is composed of a core of 2 alpha, a beta and a beta' subunits. The core is associated with a delta subunit and one of several sigma factors.

Functionally, participates in both the initiation and recycling phases of transcription. In the presence of the delta subunit, RNAP displays an increased specificity of transcription, a decreased affinity for nucleic acids, and an increased efficiency of RNA synthesis because of enhanced recycling. This chain is Probable DNA-directed RNA polymerase subunit delta, found in Streptococcus suis (strain 05ZYH33).